A 462-amino-acid chain; its full sequence is L-seryl-tRNA(Sec) selenium transferase (462 aa).

Lys-292 carries the post-translational modification N6-(pyridoxal phosphate)lysine.

This sequence belongs to the SelA family. The cofactor is pyridoxal 5'-phosphate.

The protein resides in the cytoplasm. It carries out the reaction L-seryl-tRNA(Sec) + selenophosphate + H(+) = L-selenocysteinyl-tRNA(Sec) + phosphate. The protein operates within aminoacyl-tRNA biosynthesis; selenocysteinyl-tRNA(Sec) biosynthesis; selenocysteinyl-tRNA(Sec) from L-seryl-tRNA(Sec) (bacterial route): step 1/1. Its function is as follows. Converts seryl-tRNA(Sec) to selenocysteinyl-tRNA(Sec) required for selenoprotein biosynthesis. This is L-seryl-tRNA(Sec) selenium transferase from Geotalea daltonii (strain DSM 22248 / JCM 15807 / FRC-32) (Geobacter daltonii).